Consider the following 401-residue polypeptide: Glyceraldehyde-3-phosphate dehydrogenase A, chloroplastic (401 aa).

A chloroplast-targeting transit peptide spans 1–65 (MASNMLSIAN…RSSQNGVVEA (65 aa)). Residues 76 to 77 (RI), Asp100, and Arg145 contribute to the NADP(+) site. Residues 217-219 (SCT), Thr248, Arg263, 276-277 (TG), and Arg299 contribute to the D-glyceraldehyde 3-phosphate site. Residue Cys218 is the Nucleophile of the active site. Asn381 contributes to the NADP(+) binding site.

It belongs to the glyceraldehyde-3-phosphate dehydrogenase family. Tetramer of either four A chains (GAPDH 2) or two A and two B chains (GAPDH 1).

It localises to the plastid. Its subcellular location is the chloroplast. The enzyme catalyses D-glyceraldehyde 3-phosphate + phosphate + NADP(+) = (2R)-3-phospho-glyceroyl phosphate + NADPH + H(+). The protein operates within carbohydrate biosynthesis; Calvin cycle. The protein is Glyceraldehyde-3-phosphate dehydrogenase A, chloroplastic (GAPA) of Spinacia oleracea (Spinach).